The sequence spans 1542 residues: ABC multidrug transporter AFR1 (1542 aa).

2 disordered regions span residues 1 to 84 (MSAA…LPAD) and 118 to 141 (SQQSQHELHRPTTRHSIRSSFSRK). Polar residues predominate over residues 18–41 (TATTQNPSGLANSQVTSDPVPSAT). Residues 60–69 (DKSVDAEKVE) are compositionally biased toward basic and acidic residues. N-linked (GlcNAc...) asparagine glycans are attached at residues Asn-207 and Asn-397. An ABC transporter 1 domain is found at 221-473 (LKVLGIFGVN…MIGLGYRDLP (253 aa)). 5 helical membrane passes run 584–604 (FGISTGYATSIIIALIVGSVY), 618–638 (GGLLFLGLLFNALTSFSELPS), 669–689 (VPYNASVIFLFSIVLYFMGGL), 694–714 (GAFFIFYLFVFLTFMVMSAFF), and 726–746 (VAARLASVLISFMVTYTGYMI). A glycan (N-linked (GlcNAc...) asparagine) is linked at Asn-822. The helical transmembrane segment at 844-864 (FGILVGFFAFFMFLQMMFIEY) threads the bilayer. Residues 917–1159 (FTWEGLNYTV…VLIDYLERNG (243 aa)) enclose the ABC transporter 2 domain. N-linked (GlcNAc...) asparagine glycosylation is present at Asn-923. 953-960 (GASGAGKT) contacts ATP. 6 helical membrane-spanning segments follow: residues 1253-1273 (WTRLFAHLAIGLIVTLTFLQL), 1284-1304 (VFAIFFATVLPALILAQIEPQ), 1335-1355 (MPYSLGCAVSFFLLLYYGVGF), 1365-1385 (FFLMILVTEIYAVTLGQAVAA), 1390-1410 (ILIAALFNPFLLVLFSIFCGV), and 1516-1536 (FGIFICYVVFNILVLLIAARF).

The protein belongs to the ABC transporter superfamily. ABCG family. PDR (TC 3.A.1.205) subfamily.

The protein resides in the cell membrane. It catalyses the reaction itraconazole(in) + ATP + H2O = itraconazole(out) + ADP + phosphate + H(+). It carries out the reaction voriconazole(in) + ATP + H2O = voriconazole(out) + ADP + phosphate + H(+). The enzyme catalyses fluconazole(in) + ATP + H2O = fluconazole(out) + ADP + phosphate + H(+). Major pleiotropic ABC efflux transporter that confers resistance to structurally and functionally unrelated compounds including azoles such as fluconazole (FLC), itraconazole (ITC), posaconazole (POS), and voriconazole (VRC). Is also able to efflux the eukaryote protein synthesis inhibitor cycloheximide (CHX). The polypeptide is ABC multidrug transporter AFR1 (Cryptococcus deuterogattii (strain R265) (Cryptococcus gattii VGII (strain R265))).